Consider the following 343-residue polypeptide: Protein RecA (343 aa).

An ATP-binding site is contributed by Gly66 to Thr73.

It belongs to the RecA family.

Its subcellular location is the cytoplasm. Its function is as follows. Can catalyze the hydrolysis of ATP in the presence of single-stranded DNA, the ATP-dependent uptake of single-stranded DNA by duplex DNA, and the ATP-dependent hybridization of homologous single-stranded DNAs. It interacts with LexA causing its activation and leading to its autocatalytic cleavage. In Rickettsia canadensis (strain McKiel), this protein is Protein RecA.